Reading from the N-terminus, the 130-residue chain is Small ribosomal subunit protein uS9 (130 aa).

The interval 101–130 (AGLLTRDARMKERKKPGLKKARKASQFSKR) is disordered. Residues 111–130 (KERKKPGLKKARKASQFSKR) show a composition bias toward basic residues.

The protein belongs to the universal ribosomal protein uS9 family.

The chain is Small ribosomal subunit protein uS9 from Levilactobacillus brevis (strain ATCC 367 / BCRC 12310 / CIP 105137 / JCM 1170 / LMG 11437 / NCIMB 947 / NCTC 947) (Lactobacillus brevis).